The primary structure comprises 488 residues: 26S proteasome non-ATPase regulatory subunit 3 homolog A (488 aa).

The 182-residue stretch at 240 to 421 folds into the PCI domain; that stretch reads CRYLFYLGKI…GCMVSKETGD (182 aa). Residues 451–488 are disordered; it reads RFPPNTHKEKESDEKRRERKQQEEELAKHMAEEDDDDF. Positions 456 to 481 are enriched in basic and acidic residues; sequence THKEKESDEKRRERKQQEEELAKHMA.

This sequence belongs to the proteasome subunit S3 family. As to quaternary structure, component of the 19S regulatory particle (RP/PA700) lid subcomplex of the 26S proteasome. The 26S proteasome is composed of a core protease (CP), known as the 20S proteasome, capped at one or both ends by the 19S regulatory particle (RP/PA700). The RP/PA700 complex is composed of at least 17 different subunits in two subcomplexes, the base and the lid, which form the portions proximal and distal to the 20S proteolytic core, respectively. Interacts with UCH1 and UCH2. In terms of tissue distribution, ubiquitous with highest expression in flowers.

In terms of biological role, acts as a regulatory subunit of the 26 proteasome which is involved in the ATP-dependent degradation of ubiquitinated proteins. The protein is 26S proteasome non-ATPase regulatory subunit 3 homolog A of Arabidopsis thaliana (Mouse-ear cress).